We begin with the raw amino-acid sequence, 640 residues long: 1,4-alpha-glucan branching enzyme GlgB (640 aa).

Aspartate 318 (nucleophile) is an active-site residue. Glutamate 371 acts as the Proton donor in catalysis.

It belongs to the glycosyl hydrolase 13 family. GlgB subfamily. In terms of assembly, monomer.

The catalysed reaction is Transfers a segment of a (1-&gt;4)-alpha-D-glucan chain to a primary hydroxy group in a similar glucan chain.. It functions in the pathway glycan biosynthesis; glycogen biosynthesis. Catalyzes the formation of the alpha-1,6-glucosidic linkages in glycogen by scission of a 1,4-alpha-linked oligosaccharide from growing alpha-1,4-glucan chains and the subsequent attachment of the oligosaccharide to the alpha-1,6 position. In Francisella tularensis subsp. holarctica (strain LVS), this protein is 1,4-alpha-glucan branching enzyme GlgB.